Here is a 359-residue protein sequence, read N- to C-terminus: Phosphoserine aminotransferase (359 aa).

L-glutamate is bound at residue arginine 41. Residues 75–76, tryptophan 99, threonine 147, aspartate 166, and glutamine 189 each bind pyridoxal 5'-phosphate; that span reads AS. Residue lysine 190 is modified to N6-(pyridoxal phosphate)lysine. 231–232 provides a ligand contact to pyridoxal 5'-phosphate; sequence NT.

This sequence belongs to the class-V pyridoxal-phosphate-dependent aminotransferase family. SerC subfamily. As to quaternary structure, homodimer. Requires pyridoxal 5'-phosphate as cofactor.

The protein resides in the cytoplasm. The catalysed reaction is O-phospho-L-serine + 2-oxoglutarate = 3-phosphooxypyruvate + L-glutamate. It catalyses the reaction 4-(phosphooxy)-L-threonine + 2-oxoglutarate = (R)-3-hydroxy-2-oxo-4-phosphooxybutanoate + L-glutamate. Its pathway is amino-acid biosynthesis; L-serine biosynthesis; L-serine from 3-phospho-D-glycerate: step 2/3. It functions in the pathway cofactor biosynthesis; pyridoxine 5'-phosphate biosynthesis; pyridoxine 5'-phosphate from D-erythrose 4-phosphate: step 3/5. In terms of biological role, catalyzes the reversible conversion of 3-phosphohydroxypyruvate to phosphoserine and of 3-hydroxy-2-oxo-4-phosphonooxybutanoate to phosphohydroxythreonine. The polypeptide is Phosphoserine aminotransferase (Azobacteroides pseudotrichonymphae genomovar. CFP2).